The sequence spans 220 residues: Fructose-6-phosphate aldolase (220 aa).

The Schiff-base intermediate with substrate role is filled by lysine 85.

This sequence belongs to the transaldolase family. Type 3A subfamily. As to quaternary structure, homodecamer.

Its subcellular location is the cytoplasm. It catalyses the reaction beta-D-fructose 6-phosphate = dihydroxyacetone + D-glyceraldehyde 3-phosphate. Catalyzes the reversible formation of fructose 6-phosphate from dihydroxyacetone and D-glyceraldehyde 3-phosphate via an aldolization reaction. The protein is Fructose-6-phosphate aldolase of Salmonella heidelberg (strain SL476).